Consider the following 626-residue polypeptide: Chaperone protein DnaK (626 aa).

At Thr197 the chain carries Phosphothreonine; by autocatalysis. The span at 595-614 shows a compositional bias: low complexity; sequence QNMAQQQQAQGGAQQQNQNK. The segment at 595–626 is disordered; sequence QNMAQQQQAQGGAQQQNQNKGGDDDVIDAEVE.

The protein belongs to the heat shock protein 70 family.

Functionally, acts as a chaperone. This is Chaperone protein DnaK from Nautilia profundicola (strain ATCC BAA-1463 / DSM 18972 / AmH).